Here is a 272-residue protein sequence, read N- to C-terminus: Shikimate dehydrogenase (NADP(+)) (272 aa).

Shikimate contacts are provided by residues 14-16 and threonine 61; that span reads SKS. The active-site Proton acceptor is the lysine 65. An NADP(+)-binding site is contributed by glutamate 77. 2 residues coordinate shikimate: asparagine 86 and aspartate 102. Residues 126-130, 149-154, and methionine 213 each bind NADP(+); these read GAGGA and NRTVSR. Residue tyrosine 215 participates in shikimate binding. Glycine 237 contacts NADP(+).

This sequence belongs to the shikimate dehydrogenase family. As to quaternary structure, homodimer.

The enzyme catalyses shikimate + NADP(+) = 3-dehydroshikimate + NADPH + H(+). Its pathway is metabolic intermediate biosynthesis; chorismate biosynthesis; chorismate from D-erythrose 4-phosphate and phosphoenolpyruvate: step 4/7. Its function is as follows. Involved in the biosynthesis of the chorismate, which leads to the biosynthesis of aromatic amino acids. Catalyzes the reversible NADPH linked reduction of 3-dehydroshikimate (DHSA) to yield shikimate (SA). The protein is Shikimate dehydrogenase (NADP(+)) of Shigella sonnei (strain Ss046).